The sequence spans 804 residues: Protein-lysine N-methyltransferase SMYD4 (804 aa).

112 to 114 (RSA) provides a ligand contact to S-adenosyl-L-methionine. The 342-residue stretch at 233–574 (SSIGLCVDPL…KGQEILHCYG (342 aa)) folds into the SET domain. Cysteine 296, cysteine 299, cysteine 309, cysteine 312, cysteine 318, cysteine 322, histidine 331, and cysteine 335 together coordinate Zn(2+). An MYND-type zinc finger spans residues 296-335 (CHRCLKHTLATVPCDGCSYAKYCSQECLQQAWELYHRTEC). S-adenosyl-L-methionine is bound by residues asparagine 427, 539-540 (NH), tyrosine 573, and phenylalanine 595.

The protein belongs to the class V-like SAM-binding methyltransferase superfamily. In terms of assembly, interacts (via MYND-type zinc finger) with HDAC1.

Its subcellular location is the nucleus. The protein resides in the cytoplasm. It catalyses the reaction L-lysyl-[protein] + S-adenosyl-L-methionine = N(6)-methyl-L-lysyl-[protein] + S-adenosyl-L-homocysteine + H(+). Its function is as follows. Protein-lysine N-methyltransferase. Monomethylates PRMT5, modulating its transcriptional activity. May also act as a histone methyltransferase. Plays a critical role in cardiac development. Acts as a key epigenetic regulator of gene expression during cardiac development via its dual activities as a methyltransferase and negative regulator of HDAC1. The chain is Protein-lysine N-methyltransferase SMYD4 from Homo sapiens (Human).